The following is a 310-amino-acid chain: Cytosolic Fe-S cluster assembly factor NUBP1 homolog (310 aa).

Residues cysteine 12, cysteine 26, cysteine 29, and cysteine 35 each contribute to the [4Fe-4S] cluster site. 66–73 contributes to the ATP binding site; that stretch reads GKGGVGKS. [4Fe-4S] cluster is bound by residues cysteine 240 and cysteine 243.

This sequence belongs to the Mrp/NBP35 ATP-binding proteins family. NUBP1/NBP35 subfamily. In terms of assembly, heterotetramer of 2 NUBP1 and 2 NUBP2 chains. The cofactor is [4Fe-4S] cluster.

The protein resides in the cytoplasm. In terms of biological role, component of the cytosolic iron-sulfur (Fe/S) protein assembly (CIA) machinery. Required for maturation of extramitochondrial Fe-S proteins. The NUBP1-NUBP2 heterotetramer forms a Fe-S scaffold complex, mediating the de novo assembly of an Fe-S cluster and its transfer to target apoproteins. The chain is Cytosolic Fe-S cluster assembly factor NUBP1 homolog from Brugia malayi (Filarial nematode worm).